The sequence spans 287 residues: Acetylglutamate kinase (287 aa).

Substrate-binding positions include 64–65 (GG), arginine 86, and asparagine 185.

The protein belongs to the acetylglutamate kinase family. ArgB subfamily.

The protein localises to the cytoplasm. It catalyses the reaction N-acetyl-L-glutamate + ATP = N-acetyl-L-glutamyl 5-phosphate + ADP. It participates in amino-acid biosynthesis; L-arginine biosynthesis; N(2)-acetyl-L-ornithine from L-glutamate: step 2/4. Functionally, catalyzes the ATP-dependent phosphorylation of N-acetyl-L-glutamate. The polypeptide is Acetylglutamate kinase (Hydrogenobaculum sp. (strain Y04AAS1)).